The chain runs to 1055 residues: Endo-1,4-beta-xylanase A (1055 aa).

An N-terminal signal peptide occupies residues Met-1–Ala-29. Residues Ala-30–Met-357 form an a region. In terms of domain architecture, GH10 spans Glu-360–Pro-688. Residue Glu-498 is the Proton donor of the active site. The active-site Nucleophile is Glu-604. CBM-cenC domains follow at residues Pro-720–Gln-851 and Lys-895–Asn-1040.

It belongs to the glycosyl hydrolase 10 (cellulase F) family.

It carries out the reaction Endohydrolysis of (1-&gt;4)-beta-D-xylosidic linkages in xylans.. The sequence is that of Endo-1,4-beta-xylanase A (xynA) from Thermotoga neapolitana.